Reading from the N-terminus, the 291-residue chain is Elongation factor Ts (291 aa).

The tract at residues 79–82 is involved in Mg(2+) ion dislocation from EF-Tu; the sequence is TDFV.

This sequence belongs to the EF-Ts family.

It is found in the cytoplasm. Associates with the EF-Tu.GDP complex and induces the exchange of GDP to GTP. It remains bound to the aminoacyl-tRNA.EF-Tu.GTP complex up to the GTP hydrolysis stage on the ribosome. This is Elongation factor Ts from Ruegeria pomeroyi (strain ATCC 700808 / DSM 15171 / DSS-3) (Silicibacter pomeroyi).